We begin with the raw amino-acid sequence, 678 residues long: MTPSDFISIDYKTLTKAQLKSYIDDLAEYLGEQSYLYHTIDKPVITDSDYDKLFRLLQDLVDDNPQLKPSNSVLDRVGGEILAGFETIKHKKKMTSLANVFSLEELRDFYDKIEYDIELECEPKMDGLAISIFYKNGKFDYAVTRGDGIQGEKVSENVKTIRNVPLKLNTSNPPEELEVRGEIILDKQSFLSLNEYMQTHENKTFANPRNAAAGSIRMLDSKVVAKRPLKLYSYGIGYFSKDFVHPETQFELMNLLQSFGFTISDNMFLAKNFSEVEVYHHKMSHQRADLAYDIDGLVFKVNNIKLQDTIGYTARGPKWAIAYKFPAEEVESEVLNVEFQVGRTGAITPVARLKPVAVGGVIVSNATLHNINEIKRKDIRVGDRVIVRRAGDVIPEVVKSLPQYRKPDAQMVEMPTNCPVCDSAIENINDQAIYRCTGGWHCQAQTTERLKHFVSRKAMDIDKLGAKLIEQLVAADLIKYPADIYKLNFEQLTGLERMGAKSSQNVLDSITKSKEPSLARFIFAIGIKDVGEVSSEALANHFGSLESFREAKFEQLIEINDIGEIIAKNIVSFWQDSLNIQIVDELLGNSINIQNPEKIEQAHNESFTNKTIVITGTFENYNRTELTQLLKSMGAKVTSSVSKKTDMVICGDNAGSKLTKAQDLGVEVIFEEDLQNLL.

Residues 47–51 (DSDYD), 96–97 (SL), and Glu122 contribute to the NAD(+) site. Lys124 functions as the N6-AMP-lysine intermediate in the catalytic mechanism. NAD(+)-binding residues include Arg145, Glu182, Lys300, and Lys324. 4 residues coordinate Zn(2+): Cys418, Cys421, Cys436, and Cys442. The region spanning 602–678 (AHNESFTNKT…IFEEDLQNLL (77 aa)) is the BRCT domain.

Belongs to the NAD-dependent DNA ligase family. LigA subfamily. Mg(2+) is required as a cofactor. Requires Mn(2+) as cofactor.

The catalysed reaction is NAD(+) + (deoxyribonucleotide)n-3'-hydroxyl + 5'-phospho-(deoxyribonucleotide)m = (deoxyribonucleotide)n+m + AMP + beta-nicotinamide D-nucleotide.. DNA ligase that catalyzes the formation of phosphodiester linkages between 5'-phosphoryl and 3'-hydroxyl groups in double-stranded DNA using NAD as a coenzyme and as the energy source for the reaction. It is essential for DNA replication and repair of damaged DNA. The chain is DNA ligase from Francisella philomiragia subsp. philomiragia (strain ATCC 25017 / CCUG 19701 / FSC 153 / O#319-036).